The following is a 216-amino-acid chain: Cytochrome c oxidase assembly protein CtaG (216 aa).

The span at 1–23 (MTDAPQHPQQPATGTPATPKAAP) shows a compositional bias: low complexity. The segment at 1-24 (MTDAPQHPQQPATGTPATPKAAPR) is disordered. Topologically, residues 1 to 26 (MTDAPQHPQQPATGTPATPKAAPRVG) are cytoplasmic. A helical; Signal-anchor for type II membrane protein membrane pass occupies residues 27–49 (RDVRIGATCGLLVALMVGAAYAA). The Periplasmic segment spans residues 50-216 (VPFYNWFCRA…SEPDRPGGSI (167 aa)).

It belongs to the COX11/CtaG family.

Its subcellular location is the cell inner membrane. Functionally, exerts its effect at some terminal stage of cytochrome c oxidase synthesis, probably by being involved in the insertion of the copper B into subunit I. This Nitrobacter hamburgensis (strain DSM 10229 / NCIMB 13809 / X14) protein is Cytochrome c oxidase assembly protein CtaG.